The primary structure comprises 232 residues: Small ribosomal subunit protein uS3 (232 aa).

One can recognise a KH type-2 domain in the interval 39–107 (IRKFLKKELF…DVAINIKEEK (69 aa)). The segment at 213–232 (QPEPAEEKKGGRRPSRKRGE) is disordered. Over residues 222-232 (GGRRPSRKRGE) the composition is skewed to basic residues.

The protein belongs to the universal ribosomal protein uS3 family. Part of the 30S ribosomal subunit. Forms a tight complex with proteins S10 and S14.

In terms of biological role, binds the lower part of the 30S subunit head. Binds mRNA in the 70S ribosome, positioning it for translation. The chain is Small ribosomal subunit protein uS3 from Sulfurovum sp. (strain NBC37-1).